Reading from the N-terminus, the 396-residue chain is MAVQESAAQLSMTLKVQEYPTLKVPYETLNKRFRAAQKNIDRETSHVTMVVAELEKTLSGCPAVDSVVSLLDGVVEKLSVLKRKAVESIQAEDESAKLCKRRIEHLKEHSSDQPAAASVWKRKRMDRMMVEHLLRCGYYNTAVKLARQSGIEDLVNIEMFLTAKEVEESLERRETATCLAWCHDNKSRLRKMKSCLEFSLRIQEFIELIRQNKRLDAVRHARKHFSQAEGSQLDEVRQAMGMLAFPPDTHISPYKDLLDPARWRMLIQQFRYDNYRLHQLGNNSVFTLTLQAGLSAIKTPQCYKEDGSSKSPDCPVCSRSLNKLAQPLPMAHCANSRLVCKISGDVMNENNPPMMLPNGYVYGYNSLLSIRQDDKVVCPRTKEVFHFSQAEKVYIM.

An extracellular and involved in cell to cell contact region spans residues 1–124 (MAVQESAAQL…AAASVWKRKR (124 aa)). Residue threonine 28 is modified to Phosphothreonine. The 33-residue stretch at 121–153 (KRKRMDRMMVEHLLRCGYYNTAVKLARQSGIED) folds into the LisH domain. A CTLH domain is found at 159-216 (MFLTAKEVEESLERRETATCLAWCHDNKSRLRKMKSCLEFSLRIQEFIELIRQNKRLD). The RING-Gid-type zinc-finger motif lies at 314–381 (CPVCSRSLNK…QDDKVVCPRT (68 aa)).

Identified in the CTLH complex that contains GID4, RANBP9 and/or RANBP10, MKLN1, MAEA, RMND5A (or alternatively its paralog RMND5B), GID8, ARMC8, WDR26 and YPEL5. Within this complex, MAEA, RMND5A (or alternatively its paralog RMND5B), GID8, WDR26, and RANBP9 and/or RANBP10 form the catalytic core, while GID4, MKLN1, ARMC8 and YPEL5 have ancillary roles. Interacts with F-actin. Post-translationally, autoubiquitinated as component of the CTLH E3 ubiquitin-protein ligase complex (in vitro).

Its subcellular location is the cytoplasm. The protein resides in the nucleus. It localises to the nucleoplasm. It is found in the nucleus matrix. The protein localises to the cell membrane. Its subcellular location is the cytoskeleton. The enzyme catalyses S-ubiquitinyl-[E2 ubiquitin-conjugating enzyme]-L-cysteine + [acceptor protein]-L-lysine = [E2 ubiquitin-conjugating enzyme]-L-cysteine + N(6)-ubiquitinyl-[acceptor protein]-L-lysine.. In terms of biological role, core component of the CTLH E3 ubiquitin-protein ligase complex that selectively accepts ubiquitin from UBE2H and mediates ubiquitination and subsequent proteasomal degradation of the transcription factor HBP1. MAEA and RMND5A are both required for catalytic activity of the CTLH E3 ubiquitin-protein ligase complex. MAEA is required for normal cell proliferation. The CTLH E3 ubiquitin-protein ligase complex is not required for the degradation of enzymes involved in gluconeogenesis, such as FBP1. Plays a role in erythroblast enucleation during erythrocyte maturation and in the development of mature macrophages. Mediates the attachment of erythroid cell to mature macrophages; this MAEA-mediated contact inhibits erythroid cell apoptosis. Participates in erythroblastic island formation, which is the functional unit of definitive erythropoiesis. Associates with F-actin to regulate actin distribution in erythroblasts and macrophages. May contribute to nuclear architecture and cells division events. This chain is E3 ubiquitin-protein transferase MAEA (MAEA), found in Pongo abelii (Sumatran orangutan).